The chain runs to 428 residues: Histone deacetylase 3 (428 aa).

The histone deacetylase stretch occupies residues 3-316 (NRTSYFYDPD…WTFETSLLLE (314 aa)). 1D-myo-inositol 1,4,5,6-tetrakisphosphate is bound by residues His17, Gly21, and Lys25. His135 is an active-site residue. Residues Asp170, His172, and Asp259 each contribute to the Zn(2+) site. Arg265 contacts 1D-myo-inositol 1,4,5,6-tetrakisphosphate. The interval 385–428 (LNYERNDEPDPDERGAEENYTRPEAANEFYDGDHDNDKESDVEI) is disordered. 2 stretches are compositionally biased toward basic and acidic residues: residues 386 to 405 (NYER…ENYT) and 415 to 428 (DGDH…DVEI).

It belongs to the histone deacetylase family. HD type 1 subfamily.

It localises to the nucleus. It is found in the chromosome. Its subcellular location is the cytoplasm. The protein localises to the cytosol. It carries out the reaction N(6)-acetyl-L-lysyl-[histone] + H2O = L-lysyl-[histone] + acetate. Inositol tetraphosphate (1D-myo-inositol 1,4,5,6-tetrakisphosphate) promotes the histone deacetylase activity by acting as an intermolecular glue between hdac3 and N-Cor repressor complex components. In terms of biological role, responsible for the deacetylation of lysine residues on the N-terminal part of the core histones (H2A, H2B, H3 and H4). Histone deacetylation gives a tag for epigenetic repression and plays an important role in transcriptional regulation, cell cycle progression and developmental events. Histone deacetylases act via the formation of large multiprotein complexes, such as N-Cor repressor complex, which activate the histone deacetylase activity. May play a role in the regulation of the circadian clock in a deacetylase activity-independent manner. In Tetraodon nigroviridis (Spotted green pufferfish), this protein is Histone deacetylase 3 (hdac3).